The chain runs to 335 residues: Biotin synthase (335 aa).

Residues 1–20 (MVSVGTQSHSGRDQAEQNPS) form a disordered region. The Radical SAM core domain maps to 59-284 (GHLQKSSLLS…MMPQSMVRLS (226 aa)). Residues Cys74, Cys78, and Cys81 each coordinate [4Fe-4S] cluster. Cys118, Cys150, Cys210, and Arg282 together coordinate [2Fe-2S] cluster.

Belongs to the radical SAM superfamily. Biotin synthase family. As to quaternary structure, homodimer. It depends on [4Fe-4S] cluster as a cofactor. [2Fe-2S] cluster serves as cofactor.

It catalyses the reaction (4R,5S)-dethiobiotin + (sulfur carrier)-SH + 2 reduced [2Fe-2S]-[ferredoxin] + 2 S-adenosyl-L-methionine = (sulfur carrier)-H + biotin + 2 5'-deoxyadenosine + 2 L-methionine + 2 oxidized [2Fe-2S]-[ferredoxin]. It functions in the pathway cofactor biosynthesis; biotin biosynthesis; biotin from 7,8-diaminononanoate: step 2/2. Functionally, catalyzes the conversion of dethiobiotin (DTB) to biotin by the insertion of a sulfur atom into dethiobiotin via a radical-based mechanism. In Zymomonas mobilis subsp. mobilis (strain ATCC 31821 / ZM4 / CP4), this protein is Biotin synthase.